The following is a 127-amino-acid chain: Large ribosomal subunit protein bL19 (127 aa).

Belongs to the bacterial ribosomal protein bL19 family.

Functionally, this protein is located at the 30S-50S ribosomal subunit interface and may play a role in the structure and function of the aminoacyl-tRNA binding site. This Jannaschia sp. (strain CCS1) protein is Large ribosomal subunit protein bL19.